Consider the following 145-residue polypeptide: uncharacterized protein (145 aa).

Residues 16 to 36 traverse the membrane as a helical segment; the sequence is VLAYLLQLSASLVLPVAIWLI.

The protein resides in the mitochondrion membrane. This is an uncharacterized protein from Arabidopsis thaliana (Mouse-ear cress).